The primary structure comprises 1376 residues: DNA-directed RNA polymerase subunit beta (1376 aa).

The protein belongs to the RNA polymerase beta chain family. The RNAP catalytic core consists of 2 alpha, 1 beta, 1 beta' and 1 omega subunit. When a sigma factor is associated with the core the holoenzyme is formed, which can initiate transcription.

It carries out the reaction RNA(n) + a ribonucleoside 5'-triphosphate = RNA(n+1) + diphosphate. DNA-dependent RNA polymerase catalyzes the transcription of DNA into RNA using the four ribonucleoside triphosphates as substrates. The sequence is that of DNA-directed RNA polymerase subunit beta from Methylorubrum extorquens (strain PA1) (Methylobacterium extorquens).